The chain runs to 540 residues: Ribonuclease Y (540 aa).

Residues 4–24 (TILVPVAVAIVSVLVGGCAGY) form a helical membrane-spanning segment. The KH domain occupies 230–293 (TVSVVNLPSD…EIAKRALERL (64 aa)). The region spanning 356 to 449 (VLSHSIEVGK…VVAADTISSA (94 aa)) is the HD domain.

It belongs to the RNase Y family.

The protein resides in the cell membrane. Functionally, endoribonuclease that initiates mRNA decay. The polypeptide is Ribonuclease Y (Lactobacillus johnsonii (strain CNCM I-12250 / La1 / NCC 533)).